Reading from the N-terminus, the 405-residue chain is Riboflavin biosynthesis protein RibBA (405 aa).

The tract at residues 1 to 205 (MEQIKLDSIA…IKDLIEYRLT (205 aa)) is DHBP synthase. Residues 30–31 (RE), aspartate 35, 144–148 (RVGHT), and glutamate 168 contribute to the D-ribulose 5-phosphate site. Glutamate 31 is a Mg(2+) binding site. Histidine 147 contacts Mg(2+). The GTP cyclohydrolase II stretch occupies residues 206–405 (HESLVKREIG…KMGHTILKKD (200 aa)). 256-260 (RVHSS) provides a ligand contact to GTP. Residues cysteine 261, cysteine 272, and cysteine 274 each contribute to the Zn(2+) site. GTP-binding positions include glutamine 277, 299–301 (EGR), and threonine 321. The active-site Proton acceptor; for GTP cyclohydrolase activity is the aspartate 333. The Nucleophile; for GTP cyclohydrolase activity role is filled by arginine 335. 2 residues coordinate GTP: threonine 356 and lysine 361.

In the N-terminal section; belongs to the DHBP synthase family. It in the C-terminal section; belongs to the GTP cyclohydrolase II family. It depends on Mg(2+) as a cofactor. Requires Mn(2+) as cofactor. The cofactor is Zn(2+).

It catalyses the reaction D-ribulose 5-phosphate = (2S)-2-hydroxy-3-oxobutyl phosphate + formate + H(+). It carries out the reaction GTP + 4 H2O = 2,5-diamino-6-hydroxy-4-(5-phosphoribosylamino)-pyrimidine + formate + 2 phosphate + 3 H(+). Its pathway is cofactor biosynthesis; riboflavin biosynthesis; 2-hydroxy-3-oxobutyl phosphate from D-ribulose 5-phosphate: step 1/1. The protein operates within cofactor biosynthesis; riboflavin biosynthesis; 5-amino-6-(D-ribitylamino)uracil from GTP: step 1/4. Its function is as follows. Catalyzes the conversion of D-ribulose 5-phosphate to formate and 3,4-dihydroxy-2-butanone 4-phosphate. Catalyzes the conversion of GTP to 2,5-diamino-6-ribosylamino-4(3H)-pyrimidinone 5'-phosphate (DARP), formate and pyrophosphate. The protein is Riboflavin biosynthesis protein RibBA of Cytophaga hutchinsonii (strain ATCC 33406 / DSM 1761 / CIP 103989 / NBRC 15051 / NCIMB 9469 / D465).